The chain runs to 62 residues: Large ribosomal subunit protein uL29 (62 aa).

The protein belongs to the universal ribosomal protein uL29 family.

In Chromobacterium violaceum (strain ATCC 12472 / DSM 30191 / JCM 1249 / CCUG 213 / NBRC 12614 / NCIMB 9131 / NCTC 9757 / MK), this protein is Large ribosomal subunit protein uL29.